Reading from the N-terminus, the 189-residue chain is Elongation factor P (189 aa).

The protein belongs to the elongation factor P family.

The protein resides in the cytoplasm. It functions in the pathway protein biosynthesis; polypeptide chain elongation. Its function is as follows. Involved in peptide bond synthesis. Stimulates efficient translation and peptide-bond synthesis on native or reconstituted 70S ribosomes in vitro. Probably functions indirectly by altering the affinity of the ribosome for aminoacyl-tRNA, thus increasing their reactivity as acceptors for peptidyl transferase. The chain is Elongation factor P from Rhizobium meliloti (strain 1021) (Ensifer meliloti).